The sequence spans 660 residues: Cysteine-rich receptor-like protein kinase 22 (660 aa).

A signal peptide spans 1-24; it reads MKQRSFLSILCFILLAFGVASVSA. 2 Gnk2-homologous domains span residues 25-128 and 137-250; these read QTCI…NISF and IEPQ…LFTF. Residues 25–294 are Extracellular-facing; the sequence is QTCIENRKYF…DSRGVSAGIV (270 aa). N-linked (GlcNAc...) asparagine glycosylation is found at asparagine 37, asparagine 53, asparagine 105, asparagine 125, asparagine 191, asparagine 230, and asparagine 256. Positions 264–273 are enriched in pro residues; the sequence is KPPMNVPRPP. Residues 264–283 are disordered; it reads KPPMNVPRPPSVGHGANTTD. N-linked (GlcNAc...) asparagine glycosylation is found at asparagine 280 and asparagine 284. Residues 295-315 form a helical membrane-spanning segment; the sequence is VVITVPAVVIVLILVVLGFFI. At 316-660 the chain is on the cytoplasmic side; it reads CWRRKSLQRT…DPLSEGLESG (345 aa). The 280-residue stretch at 353 to 632 folds into the Protein kinase domain; the sequence is FSKSNKLGEG…IVSMLTSNTI (280 aa). ATP contacts are provided by residues 359–367 and lysine 381; that span reads LGEGRFGEV. Tyrosine 426 is subject to Phosphotyrosine. The active-site Proton acceptor is the aspartate 478. Serine 482 carries the phosphoserine modification. Threonine 518 is subject to Phosphothreonine. Residue tyrosine 526 is modified to Phosphotyrosine.

This sequence belongs to the protein kinase superfamily. Ser/Thr protein kinase family. CRK subfamily.

The protein resides in the membrane. The catalysed reaction is L-seryl-[protein] + ATP = O-phospho-L-seryl-[protein] + ADP + H(+). It catalyses the reaction L-threonyl-[protein] + ATP = O-phospho-L-threonyl-[protein] + ADP + H(+). This Arabidopsis thaliana (Mouse-ear cress) protein is Cysteine-rich receptor-like protein kinase 22 (CRK22).